The following is an 829-amino-acid chain: Periplasmic nitrate reductase (829 aa).

A signal peptide (tat-type signal) is located at residues 1–30 (MKLSRRDFMKANAVAAAAAVAGVSAPTLAA). The 4Fe-4S Mo/W bis-MGD-type domain occupies 41–97 (ITWDKAPCRFCGTGCSVLVGSQDGRVVATQGDPDAPVNRGLNCIKGYFLSKIMYGQD). Residues Cys-48, Cys-51, Cys-55, and Cys-83 each contribute to the [4Fe-4S] cluster site. Residues Lys-85, Gln-152, Asn-177, Cys-181, 214 to 221 (WGSNMAEM), 245 to 249 (STFEH), 264 to 266 (QTD), Met-374, Gln-378, Asn-484, 510 to 511 (SD), Lys-533, Asp-560, and 719 to 728 (TGRVLEHWHT) contribute to the Mo-bis(molybdopterin guanine dinucleotide) site. Residue Phe-795 participates in substrate binding. Residues Asn-803 and Lys-820 each contribute to the Mo-bis(molybdopterin guanine dinucleotide) site.

It belongs to the prokaryotic molybdopterin-containing oxidoreductase family. NasA/NapA/NarB subfamily. In terms of assembly, component of the periplasmic nitrate reductase NapAB complex composed of NapA and NapB. Requires [4Fe-4S] cluster as cofactor. It depends on Mo-bis(molybdopterin guanine dinucleotide) as a cofactor. Post-translationally, predicted to be exported by the Tat system. The position of the signal peptide cleavage has not been experimentally proven.

The protein localises to the periplasm. The enzyme catalyses 2 Fe(II)-[cytochrome] + nitrate + 2 H(+) = 2 Fe(III)-[cytochrome] + nitrite + H2O. Functionally, catalytic subunit of the periplasmic nitrate reductase complex NapAB. Receives electrons from NapB and catalyzes the reduction of nitrate to nitrite. This is Periplasmic nitrate reductase from Aeromonas hydrophila subsp. hydrophila (strain ATCC 7966 / DSM 30187 / BCRC 13018 / CCUG 14551 / JCM 1027 / KCTC 2358 / NCIMB 9240 / NCTC 8049).